Consider the following 158-residue polypeptide: Sec-independent protein translocase protein TatB (158 aa).

A helical membrane pass occupies residues 1 to 21 (MFDIGWSELLVIGVVALVVVG). The interval 73–158 (RSMGLDAMKQ…PAPAEPKSNA (86 aa)) is disordered. Over residues 83–92 (AADRFEKWDP) the composition is skewed to basic and acidic residues. 2 stretches are compositionally biased toward low complexity: residues 94–132 (KPQQGAPKPAAPASSIPAAKAQQGAGAAAVTAPPASEPA) and 138–158 (APAAAAPEAASPAPAEPKSNA).

The protein belongs to the TatB family. The Tat system comprises two distinct complexes: a TatABC complex, containing multiple copies of TatA, TatB and TatC subunits, and a separate TatA complex, containing only TatA subunits. Substrates initially bind to the TatABC complex, which probably triggers association of the separate TatA complex to form the active translocon.

The protein localises to the cell inner membrane. Part of the twin-arginine translocation (Tat) system that transports large folded proteins containing a characteristic twin-arginine motif in their signal peptide across membranes. Together with TatC, TatB is part of a receptor directly interacting with Tat signal peptides. TatB may form an oligomeric binding site that transiently accommodates folded Tat precursor proteins before their translocation. The chain is Sec-independent protein translocase protein TatB from Cereibacter sphaeroides (strain ATCC 17029 / ATH 2.4.9) (Rhodobacter sphaeroides).